Reading from the N-terminus, the 372-residue chain is Aryl-hydrocarbon-interacting protein-like 1 (372 aa).

In terms of domain architecture, PPIase FKBP-type spans Arg-53–Gln-145. 3 TPR repeats span residues Val-178–Leu-211, Asn-230–Ile-263, and Val-264–Met-297. Residues Lys-315–His-372 form a disordered region. The span at Pro-335–Ala-345 shows a compositional bias: pro residues.

Interacts with NUB1.

The protein localises to the cytoplasm. Its subcellular location is the nucleus. In terms of biological role, may be important in protein trafficking and/or protein folding and stabilization. This chain is Aryl-hydrocarbon-interacting protein-like 1 (AIPL1), found in Papio cynocephalus (Yellow baboon).